Consider the following 732-residue polypeptide: MAP7 domain-containing protein 2 (732 aa).

The residue at position 1 (methionine 1) is an N-acetylmethionine. The segment covering methionine 1–threonine 10 has biased composition (gly residues). Disordered regions lie at residues methionine 1 to glutamate 64, tryptophan 95 to glutamate 123, proline 157 to serine 186, glycine 210 to alanine 244, and glutamate 279 to glutamate 509. Over residues leucine 49–glutamate 64 the composition is skewed to basic and acidic residues. Positions serine 51–lysine 146 form a coiled coil. Over residues methionine 329–glycine 345 the composition is skewed to basic and acidic residues. The span at leucine 347–glutamate 357 shows a compositional bias: low complexity. Residues alanine 359–alanine 374 show a composition bias toward basic and acidic residues. Low complexity predominate over residues alanine 375–alanine 386. Residues leucine 404–glutamate 509 are compositionally biased toward basic and acidic residues.

The protein belongs to the MAP7 family. As to quaternary structure, interacts (via N-terminus) with microtubules; facilitates microtubule stabilization. Interacts with kinesin-1 family members, KIF5A, KIF5B and KIF5C.

Its subcellular location is the cytoplasm. The protein resides in the cytoskeleton. It localises to the microtubule organizing center. The protein localises to the centrosome. It is found in the midbody. Its subcellular location is the cell projection. The protein resides in the neuron projection. It localises to the axon. Microtubule-stabilizing protein that plays a role in the control of cell motility and neurite outgrowth via direct binding to the microtubule. Acts as a critical cofactor for kinesin transport. In the proximal axon, regulates kinesin-1 family members, KIF5A, KIF5B and KIF5C recruitment to microtubules and contributes to kinesin-1-mediated transport in the axons. The polypeptide is MAP7 domain-containing protein 2 (MAP7D2) (Homo sapiens (Human)).